Here is a 1050-residue protein sequence, read N- to C-terminus: Zinc finger and BTB domain-containing protein 11 (1050 aa).

Residues 143-156 show a composition bias toward acidic residues; sequence LDSGEESNESEDDL. The tract at residues 143-173 is disordered; that stretch reads LDSGEESNESEDDLSNFTSPPSTASKSSKKK. Positions 157–168 are enriched in low complexity; that stretch reads SNFTSPPSTASK. In terms of domain architecture, BTB spans 214–282; it reads CDVTLLIEGE…AYTSVLSFDF (69 aa). Disordered stretches follow at residues 373-514 and 543-563; these read AEQN…EGGY and LVQR…STEE. Low complexity predominate over residues 378 to 399; the sequence is EPEQQPAPQASPEAEASVSPVE. 2 stretches are compositionally biased toward basic and acidic residues: residues 478–501 and 553–563; these read SKDE…DTYR and PKRDAKESTEE. C2H2-type zinc fingers lie at residues 566–588 and 594–616; these read HKCG…TLKH and YKCP…LIRH. The interval 617–641 is disordered; that stretch reads TRKEAPTSSSSNSTSTEASGGSSEK. Low complexity predominate over residues 623-638; sequence TSSSSNSTSTEASGGS. C2H2-type zinc fingers lie at residues 648 to 670, 676 to 698, 704 to 726, 732 to 754, 763 to 785, 791 to 813, 819 to 843, 855 to 877, 883 to 905, and 911 to 934; these read FICS…MLKH, HACQ…QSLH, FQCE…MSIH, YFCS…LKKH, YHCT…MNKH, FQCQ…VKSH, YRCN…KATH, RVCD…MNNH, FECL…VRTH, and YVCP…TKFH.

It is found in the nucleus. Its subcellular location is the nucleolus. May be involved in transcriptional regulation. This Mus musculus (Mouse) protein is Zinc finger and BTB domain-containing protein 11.